A 791-amino-acid polypeptide reads, in one-letter code: MYGSFTQLGDSFSIDLRVVDALGVKPAKPFFIQKQGIINILPAVDELVDRVAGEFTSGNAIADVKVRGTKVLDPDVVLMRLSTRKGDPIDPAAINKEIKRIWDLGYFSDVQASVEQGGDGTVLVYTVTEKPRIDNIVIEGSDKVGHDDILAAMSSKTGSVLNDKLLAQDLQKVTELYRKEGFYLAHVTHRVEARQGAASATLVLNVEEGNKLYIKKVKIEGLKELSESEVKDILALSERGMFSWFTGTGVLKDELLERDSAAITAYCLNHGYVDALVSAPKVDYEEDGIIVSFAVKEGPRYKLGKIGFDGELIDTDERLLKVVKLDDHKKDNQYFALDVMQTDDKLLSDYYADYGYAFAEINSRTQKSAEEHVIDVTYVIRKRQKVYINRVLVEGNQKTRDNVVLREMRIADGDMFEGAKLRRSNERLNRTRYFSQVDTELVPTQKEDEVDLKVKVKEQNTGALIGGVGYSTFYQFGVSGTIMERNLFGKGYYASLQAFFSGKRNSFIASFTNPRVNDGDLSFGNDAYISREYFDDFSKNTIGDTIRFALPVGEYSTVGWGYRLDRYELYDIDDDAAKIIKEREGENISSVAHVRFTRDTTDSKEKPTKGTIFKTFNEFGGGPIGGDDDFIKPVVEFQAYHQLAPNHVLHGRTRGGAVLENGQGDVPVFERFYIGGIDSIRGYNSRDISPRDPESGDRIGGDRMAFVNLEYIWVFKPDLGLALVPFFDMGINYDSSAEFNWDDELKKSVGLEMRWRSPMGDLRFAYGFPLDEGRDGEQHSGRFEFSMGQFF.

POTRA domains are found at residues 59–130 (NAIA…VTEK), 131–209 (PRID…VEEG), 212–298 (LYIK…VKEG), 301–383 (YKLG…IRKR), and 386–459 (VYIN…VKEQ).

The protein belongs to the BamA family. As to quaternary structure, part of the Bam complex.

It localises to the cell outer membrane. Part of the outer membrane protein assembly complex, which is involved in assembly and insertion of beta-barrel proteins into the outer membrane. This Nitratidesulfovibrio vulgaris (strain ATCC 29579 / DSM 644 / CCUG 34227 / NCIMB 8303 / VKM B-1760 / Hildenborough) (Desulfovibrio vulgaris) protein is Outer membrane protein assembly factor BamA.